Reading from the N-terminus, the 352-residue chain is uncharacterized protein (352 aa).

Residues Asn14, Asn52, and Asn70 are each glycosylated (N-linked (GlcNAc...) asparagine). The interval 41–73 is disordered; it reads LSDYKKNKDTLNNSNNNINQPFENSNNFNNNSK. Residues 50-72 are compositionally biased toward low complexity; it reads TLNNSNNNINQPFENSNNFNNNS. A helical membrane pass occupies residues 131–151; sequence IIFKSSGLLITLLVLYLGTFF. N-linked (GlcNAc...) asparagine glycans are attached at residues Asn165, Asn186, Asn192, Asn193, Asn203, and Asn289. The segment covering 193 to 213 has biased composition (low complexity); the sequence is NSSNSNNNNINNSNNNNNNNN. Positions 193–219 are disordered; sequence NSSNSNNNNINNSNNNNNNNNRILSPN.

It localises to the membrane. This is an uncharacterized protein from Dictyostelium discoideum (Social amoeba).